The chain runs to 304 residues: MPELALLEEVVEKVRPLLGQGKVADYIPALASVDAGKLGIAVTTVDGETLGAGDYLEPFSIQSISKVFSLTLALTLYEEAEIWSRVGKEPSGHSFNSLVQVELERGKPRNPFINAGALVIADLLQSRLGAPKHRMLELVRQLSQNDKVSFDKQVADSEYQHSARNAAIAYLMKSFGNFQGDVDTVLRTYFHYCALKMNCADLSKAMLYLANRGKSITGTELISQVQTRQLNALLATSGLYDGAGEFAYRVGMPGKSGVGGGIIAVIPGELSICVWSPELDGNGNSLAGTAMLEHLSQRLGRSIF.

7 residues coordinate substrate: S63, N114, E158, N165, Y189, Y240, and V258.

It belongs to the glutaminase family. In terms of assembly, homotetramer.

The enzyme catalyses L-glutamine + H2O = L-glutamate + NH4(+). The polypeptide is Glutaminase (Shewanella baltica (strain OS195)).